The sequence spans 128 residues: Kinetoplast-associated protein 4 (128 aa).

Positions 1–10 (MLRFVPRRLA) are excised as a propeptide. Positions 60–87 (AHPGFKRKEKEPKELKAAKAAKTSTPRA) are disordered. A compositionally biased stretch (basic and acidic residues) spans 65 to 76 (KRKEKEPKELKA).

Belongs to the KAP family. In terms of assembly, associates with the kinetoplast DNA network.

The protein resides in the mitochondrion matrix. It localises to the kinetoplast. Its function is as follows. Histone H1-like DNA-binding protein involved in the organization and segregation of kinetoplast DNA (kDNA). The mitochondrial DNA of kinetoplastid protozoa consists of about 5,000 minicircles and 20 to 30 maxicircles. These circular DNAs are held together by catenation into a highly organized compact disk structure referred to as a kinetoplast DNA (kDNA) network. Binds preferentially to a specific fragment of minicircle DNA and is able to compact kDNA networks through DNA charge neutralization and condensation. This chain is Kinetoplast-associated protein 4 (KAP4), found in Crithidia fasciculata.